A 607-amino-acid polypeptide reads, in one-letter code: UvrABC system protein C (607 aa).

Positions Glu15–Val94 constitute a GIY-YIG domain. The UVR domain maps to Asp204–Val239.

This sequence belongs to the UvrC family. Interacts with UvrB in an incision complex.

Its subcellular location is the cytoplasm. Functionally, the UvrABC repair system catalyzes the recognition and processing of DNA lesions. UvrC both incises the 5' and 3' sides of the lesion. The N-terminal half is responsible for the 3' incision and the C-terminal half is responsible for the 5' incision. The protein is UvrABC system protein C of Dehalococcoides mccartyi (strain ATCC BAA-2100 / JCM 16839 / KCTC 5957 / BAV1).